The sequence spans 20 residues: Large ribosomal subunit protein bL33 (20 aa).

It belongs to the bacterial ribosomal protein bL33 family.

The sequence is that of Large ribosomal subunit protein bL33 (rpmG) from Brevundimonas vesicularis (Pseudomonas vesicularis).